We begin with the raw amino-acid sequence, 101 residues long: Acylphosphatase-1 (101 aa).

At Ser-2 the chain carries N-acetylserine. Ser-2 carries the post-translational modification N-acetylalanine. The Acylphosphatase-like domain maps to 11 to 101 (SVDYEIFGKV…LDYTDFQIVK (91 aa)). Catalysis depends on residues Arg-26 and Asn-44.

This sequence belongs to the acylphosphatase family. Organ-common type isozyme is found in many different tissues.

It carries out the reaction an acyl phosphate + H2O = a carboxylate + phosphate + H(+). The sequence is that of Acylphosphatase-1 (ACYP1) from Bos taurus (Bovine).